The primary structure comprises 150 residues: Small ribosomal subunit protein bS6 (150 aa).

Residues 99–150 (GPSAMLQKRDRDDRGERGERGFGGGGFGGGRDREDRPRRGRDREEAATEETF) form a disordered region. Composition is skewed to basic and acidic residues over residues 105 to 118 (QKRD…RGER) and 128 to 144 (GRDR…REEA).

This sequence belongs to the bacterial ribosomal protein bS6 family.

Its function is as follows. Binds together with bS18 to 16S ribosomal RNA. The sequence is that of Small ribosomal subunit protein bS6 from Azorhizobium caulinodans (strain ATCC 43989 / DSM 5975 / JCM 20966 / LMG 6465 / NBRC 14845 / NCIMB 13405 / ORS 571).